A 179-amino-acid polypeptide reads, in one-letter code: tRNA-splicing endonuclease (179 aa).

Active-site residues include tyrosine 115, histidine 123, and lysine 154.

Belongs to the tRNA-intron endonuclease family. Archaeal short subfamily. Homotetramer; although the tetramer contains four active sites, only two participate in the cleavage. Therefore, it should be considered as a dimer of dimers.

It catalyses the reaction pretRNA = a 3'-half-tRNA molecule with a 5'-OH end + a 5'-half-tRNA molecule with a 2',3'-cyclic phosphate end + an intron with a 2',3'-cyclic phosphate and a 5'-hydroxyl terminus.. Its function is as follows. Endonuclease that removes tRNA introns. Cleaves pre-tRNA at the 5'- and 3'-splice sites to release the intron. The products are an intron and two tRNA half-molecules bearing 2',3' cyclic phosphate and 5'-OH termini. Recognizes a pseudosymmetric substrate in which 2 bulged loops of 3 bases are separated by a stem of 4 bp. In Methanopyrus kandleri (strain AV19 / DSM 6324 / JCM 9639 / NBRC 100938), this protein is tRNA-splicing endonuclease.